The sequence spans 227 residues: Germin-like protein subfamily 1 member 6 (227 aa).

Residues 1 to 25 form the signal peptide; the sequence is MMEVLLRLLVTQVILLALATSFVSC. Cysteines 35 and 51 form a disulfide. The region spanning 65–216 is the Cupin type-1 domain; it reads SGLNIARNTT…AFQLDVKLVR (152 aa). 2 N-linked (GlcNAc...) asparagine glycosylation sites follow: asparagine 72 and asparagine 80. Positions 113, 115, 120, and 162 each coordinate Mn(2+).

The protein belongs to the germin family. In terms of assembly, oligomer (believed to be a pentamer but probably hexamer).

The protein resides in the secreted. Its subcellular location is the extracellular space. It is found in the apoplast. May play a role in plant defense. Probably has no oxalate oxidase activity even if the active site is conserved. This is Germin-like protein subfamily 1 member 6 from Arabidopsis thaliana (Mouse-ear cress).